The primary structure comprises 462 residues: Glycerol-3-phosphate dehydrogenase [NAD(+)] GPDHC1, cytosolic (462 aa).

Residues 48–53 (GAGAWG), Lys196, and Ala235 each bind NAD(+). Lys196 is a binding site for substrate. The active-site Proton acceptor is the Lys285. Residues Arg347 and Gln375 each contribute to the NAD(+) site. 347-348 (RN) is a binding site for substrate.

Belongs to the NAD-dependent glycerol-3-phosphate dehydrogenase family. As to expression, expressed in roots, leaves, flowers and siliques.

Its subcellular location is the cytoplasm. The protein resides in the cytosol. It carries out the reaction sn-glycerol 3-phosphate + NAD(+) = dihydroxyacetone phosphate + NADH + H(+). Its function is as follows. Involved in cell redox homeostasis. Required for maintaining a steady state cellular NADH/NAD(+) ratio through a mitochondrial glycerol-3-phosphate redox shuttle. May function with the mitochondrial FAD-dependent glycerol-3-phosphate dehydrogenase SDP6 to shuttle reducing equivalents into the mitochondria for respiration. This chain is Glycerol-3-phosphate dehydrogenase [NAD(+)] GPDHC1, cytosolic (GPDHC1), found in Arabidopsis thaliana (Mouse-ear cress).